The chain runs to 467 residues: Probable citrate synthase 1, mitochondrial (467 aa).

Residues histidine 303, histidine 349, and aspartate 404 contribute to the active site.

It belongs to the citrate synthase family. As to quaternary structure, homodimer.

It localises to the mitochondrion matrix. The enzyme catalyses oxaloacetate + acetyl-CoA + H2O = citrate + CoA + H(+). It participates in carbohydrate metabolism; tricarboxylic acid cycle; isocitrate from oxaloacetate: step 1/2. This Aedes aegypti (Yellowfever mosquito) protein is Probable citrate synthase 1, mitochondrial.